Consider the following 836-residue polypeptide: Tuftelin-interacting protein 11 (836 aa).

A compositionally biased stretch (basic and acidic residues) spans 1–13 (MSLSHLYRDGEGH). Disordered stretches follow at residues 1–31 (MSLS…DWDL), 54–73 (WAER…RARD), and 85–136 (LKKG…AGGT). Positions 1–50 (MSLSHLYRDGEGHMDDDEDERENFEITDWDLQNEFNPNRQRHWQTKEEAT) are required for interaction with DHX15. Ser-2 carries the phosphoserine modification. Residues 14–28 (MDDDEDERENFEITD) are compositionally biased toward acidic residues. Residues 54-64 (WAERDSDEERP) are compositionally biased toward basic and acidic residues. A phosphoserine mark is found at Ser-59 and Ser-98. Acidic residues predominate over residues 91–102 (EEAELEDSDDEE). The segment covering 103-116 (KPVKQDEFPKDFGP) has biased composition (basic and acidic residues). A Phosphoserine modification is found at Ser-144. In terms of domain architecture, G-patch spans 149-195 (TKGIGQKLLQKMGYVPGRGLGKNAQGIINPIEAKQRKGKGAVGAYGS). The segment at 183–236 (QRKGKGAVGAYGSERTTQSLQDFPVVDSEEEAEEEFQKELSQWRKDPSGSKKKP) is disordered. Residue Ser-210 is modified to Phosphoserine. Residues 217-231 (EFQKELSQWRKDPSG) show a composition bias toward basic and acidic residues. The Nuclear localization signal signature appears at 699 to 704 (VKDKFN). The tract at residues 709–733 (IMNRAVSSNVGAYMQPGARENIAYL) is required for nuclear speckle localization.

Belongs to the TFP11/STIP family. Identified in the spliceosome C complex. Found in the Intron Large (IL) complex, a post-mRNA release spliceosomal complex containing the excised intron, U2, U5 and U6 snRNPs, and splicing factors. Interacts with TUFT1. Interacts with DHX15; indicative for a recruitment of DHX15 to the IL complex. Interacts with GCFC2.

The protein resides in the cytoplasm. The protein localises to the nucleus. Involved in pre-mRNA splicing, specifically in spliceosome disassembly during late-stage splicing events. Intron turnover seems to proceed through reactions in two lariat-intron associated complexes termed Intron Large (IL) and Intron Small (IS). In cooperation with DHX15 seems to mediate the transition of the U2, U5 and U6 snRNP-containing IL complex to the snRNP-free IS complex leading to efficient debranching and turnover of excised introns. May play a role in the differentiation of ameloblasts and odontoblasts or in the forming of the enamel extracellular matrix. The chain is Tuftelin-interacting protein 11 (TFIP11) from Sus scrofa (Pig).